The chain runs to 446 residues: Vacuolar cation/proton exchanger 4 (446 aa).

Residues 1-16 (MSSISTESSSNLSLLE) are compositionally biased toward low complexity. The interval 1 to 33 (MSSISTESSSNLSLLENGGGGSDKPTAETSRRV) is disordered. Residues 1-69 (MSSISTESSS…MRRILTNLQE (69 aa)) are Cytoplasmic-facing. The chain crosses the membrane as a helical span at residues 70 to 90 (VLLGTKLFILFPAVPLAVVAH). Residues 91-96 (RYDCPR) lie on the Extracellular side of the membrane. Residues 97-117 (AWVFALSLLGLTPLAERISFL) traverse the membrane as a helical segment. Residues 118-128 (TEQIAFHTGPT) lie on the Cytoplasmic side of the membrane. A helical transmembrane segment spans residues 129-149 (VGGLMNATCGNATEMIIAILA). Residues 138-173 (GNATEMIIAILAVGQRKMRIVKLSLLGSILSNLLFV) form a cation selection region. Residues 150 to 162 (VGQRKMRIVKLSL) lie on the Extracellular side of the membrane. The helical transmembrane segment at 163-183 (LGSILSNLLFVLGTSLFLGGI) threads the bilayer. At 184 to 196 (SNLRKHQSFDPRQ) the chain is on the cytoplasmic side. The chain crosses the membrane as a helical span at residues 197-217 (GDMNSMLLYLALLCQTLPMIM). The Extracellular portion of the chain corresponds to 218 to 238 (RFTMEAEEYDGSDVVVLSRAS). The helical transmembrane segment at 239–259 (SFVMLIAYLAFLIFHLFSSHL) threads the bilayer. Over 260-285 (SPPPPPLPQREDVHDDDVSDKEEEGA) the chain is Cytoplasmic. A helical membrane pass occupies residues 286-306 (VIGMWSAIFWLIIMTLLVALL). At 307 to 319 (SDYLVSTIQDAAD) the chain is on the extracellular side. The chain crosses the membrane as a helical span at residues 320–340 (SWGLSVGFIGIILLPIVGNAA). Residues 337–372 (GNAAEHAGAVIFAFRNKLDITLGIALGSATQIALFV) form a cation selection region. Topologically, residues 341–359 (EHAGAVIFAFRNKLDITLG) are cytoplasmic. The chain crosses the membrane as a helical span at residues 360–380 (IALGSATQIALFVVPVTVLVA). Residues 381–388 (WTMGIEMD) are Extracellular-facing. A helical membrane pass occupies residues 389 to 409 (LNFNLLETACFALSILVTSLV). Topologically, residues 410–416 (LQDGTSN) are cytoplasmic. The chain crosses the membrane as a helical span at residues 417 to 437 (YMKGLVLLLCYVVIAACFFVS). Residues 438 to 446 (NSPSSKLLF) are Extracellular-facing.

It belongs to the Ca(2+):cation antiporter (CaCA) (TC 2.A.19) family. Cation/proton exchanger (CAX) subfamily. Expressed at low levels in all tissues.

The protein resides in the vacuole membrane. Its function is as follows. Vacuolar cation/proton exchanger (CAX). Translocates Ca(2+) and other metal ions into vacuoles using the proton gradient formed by H(+)-ATPase and H(+)-pyrophosphatase. Cation selectivity transport in tobacco root tonoplast vesicles is Cd(2+)&gt;Zn(2+)&gt;&gt;Ca(2+)&gt;&gt;&gt;Mn(2+). The sequence is that of Vacuolar cation/proton exchanger 4 (CAX4) from Arabidopsis thaliana (Mouse-ear cress).